A 288-amino-acid chain; its full sequence is ATP synthase gamma chain (288 aa).

It belongs to the ATPase gamma chain family. As to quaternary structure, F-type ATPases have 2 components, CF(1) - the catalytic core - and CF(0) - the membrane proton channel. CF(1) has five subunits: alpha(3), beta(3), gamma(1), delta(1), epsilon(1). CF(0) has three main subunits: a, b and c.

The protein resides in the cell membrane. Functionally, produces ATP from ADP in the presence of a proton gradient across the membrane. The gamma chain is believed to be important in regulating ATPase activity and the flow of protons through the CF(0) complex. In Staphylococcus epidermidis (strain ATCC 35984 / DSM 28319 / BCRC 17069 / CCUG 31568 / BM 3577 / RP62A), this protein is ATP synthase gamma chain.